The primary structure comprises 377 residues: Alkane 1-monooxygenase 2 (377 aa).

4 consecutive transmembrane segments (helical) span residues 17-37 (GYWI…WSLG), 43-63 (AWPW…DAIV), 87-107 (VLSL…GWIL), and 116-136 (VGQL…GITV). The Fe cation site is built by histidine 138, histidine 142, histidine 168, histidine 172, and histidine 173. The chain crosses the membrane as a helical span at residues 236–256 (ALFLLGFSLAFGWLGAIFFLG). Fe cation-binding residues include histidine 312, histidine 315, and histidine 316.

Belongs to the fatty acid desaturase type 1 family. AlkB subfamily. It depends on Fe(3+) as a cofactor.

It localises to the cell inner membrane. The catalysed reaction is octane + 2 reduced [rubredoxin] + O2 + 2 H(+) = 2 oxidized [rubredoxin] + octan-1-ol + H2O. It functions in the pathway hydrocarbon metabolism; alkane degradation. Functionally, catalyzes the hydroxylation of n-alkanes in the presence of a NADH-rubredoxin reductase and rubredoxin. It preferably hydroxylases C12-C20 hydrocarbons. This is Alkane 1-monooxygenase 2 (alkB2) from Pseudomonas aeruginosa (strain ATCC 15692 / DSM 22644 / CIP 104116 / JCM 14847 / LMG 12228 / 1C / PRS 101 / PAO1).